We begin with the raw amino-acid sequence, 29 residues long: Amelogenin-like protein (29 aa).

Phosphoserine is present on Ser16.

The protein belongs to the amelogenin family.

The protein resides in the secreted. Its subcellular location is the extracellular space. It localises to the extracellular matrix. Tooth enamel proteins are produced in ameloblasts and play a role in biomineralization. In Oryctolagus cuniculus (Rabbit), this protein is Amelogenin-like protein (AMEL).